A 178-amino-acid chain; its full sequence is NADH-quinone oxidoreductase subunit B (178 aa).

Positions 45, 46, 111, and 140 each coordinate [4Fe-4S] cluster.

The protein belongs to the complex I 20 kDa subunit family. NDH-1 is composed of 15 different subunits. Subunits NuoB, C, D, E, F, and G constitute the peripheral sector of the complex. [4Fe-4S] cluster is required as a cofactor.

Its subcellular location is the cell membrane. The catalysed reaction is a quinone + NADH + 5 H(+)(in) = a quinol + NAD(+) + 4 H(+)(out). In terms of biological role, NDH-1 shuttles electrons from NADH, via FMN and iron-sulfur (Fe-S) centers, to quinones in the respiratory chain. The immediate electron acceptor for the enzyme in this species is believed to be a menaquinone. Couples the redox reaction to proton translocation (for every two electrons transferred, four hydrogen ions are translocated across the cytoplasmic membrane), and thus conserves the redox energy in a proton gradient. In Deinococcus geothermalis (strain DSM 11300 / CIP 105573 / AG-3a), this protein is NADH-quinone oxidoreductase subunit B.